The sequence spans 469 residues: Citrate synthase, mitochondrial (469 aa).

Residues 1-31 (MTLLTASSRAAARLLGAKNSSCIIFAARHAS) constitute a mitochondrion transit peptide. Catalysis depends on residues His304 and His350. Arg359 serves as a coordination point for oxaloacetate. Asp405 is an active-site residue. Residues Arg431 and Arg451 each coordinate oxaloacetate.

This sequence belongs to the citrate synthase family. Homodimer.

Its subcellular location is the mitochondrion matrix. It catalyses the reaction oxaloacetate + acetyl-CoA + H2O = citrate + CoA + H(+). The protein operates within carbohydrate metabolism; tricarboxylic acid cycle; isocitrate from oxaloacetate: step 1/2. Functionally, key enzyme of the Krebs tricarboxylic acid cycle which catalyzes the synthesis of citrate from acetyl coenzyme A and oxaloacetate. The sequence is that of Citrate synthase, mitochondrial (CS) from Amblyrhynchus cristatus (Galapagos marine iguana).